A 327-amino-acid chain; its full sequence is GPI-linked NAD(P)(+)--arginine ADP-ribosyltransferase 1 (327 aa).

Positions 1 to 22 (MWVPAVANLLLLSLGLLEAIQA) are cleaved as a signal peptide. 2 disulfide bridges follow: C53–C277 and C174–C224. N-linked (GlcNAc...) asparagine glycosylation is present at N65. A TR mART core domain is found at 73 to 273 (KVYADGWALA…IYLKALGKRS (201 aa)). Y121 and R179 together coordinate NAD(+). Active-site residues include R179 and S202. Residue S233 participates in NAD(+) binding. Residue E240 is part of the active site. A glycan (N-linked (GlcNAc...) asparagine) is linked at N253. S295 is lipidated: GPI-anchor amidated serine. Positions 296-327 (ASAQERLSTAWSLLLLLAFLAVGPFPGSPGLF) are cleaved as a propeptide — removed in mature form.

This sequence belongs to the Arg-specific ADP-ribosyltransferase family. As to expression, primarily in skeletal and cardiac muscle.

The protein resides in the sarcoplasmic reticulum membrane. The enzyme catalyses L-arginyl-[protein] + NAD(+) = N(omega)-(ADP-D-ribosyl)-L-arginyl-[protein] + nicotinamide + H(+). Its function is as follows. Has ADP-ribosyltransferase activity toward GLP1R. The polypeptide is GPI-linked NAD(P)(+)--arginine ADP-ribosyltransferase 1 (ART1) (Oryctolagus cuniculus (Rabbit)).